The primary structure comprises 368 residues: N-acetylneuraminate epimerase (368 aa).

The N-terminal stretch at 1 to 19 (MNKTITALTIIMASFATNA) is a signal peptide. 7 Kelch repeats span residues 40–84 (TVYI…AFID), 86–137 (NLYV…FVHN), 139–173 (KAYVTGGVNQNIFNGYFEDLNEAGKDSTTIDKINA), 174–219 (HYFD…VNKG), 222–265 (TWLI…VAGG), 287–336 (ENYQ…PWNN), and 338–367 (LLIIGGETAGGKAVTDSVLISVKDNKVTVQ). Glu-228 acts as the Proton acceptor in catalysis.

It belongs to the NanM family. In terms of assembly, homodimer.

Its subcellular location is the periplasm. The catalysed reaction is N-acetyl-alpha-neuraminate = N-acetyl-beta-neuraminate. Its function is as follows. Converts alpha-N-acetylneuranimic acid (Neu5Ac) to the beta-anomer, accelerating the equilibrium between the alpha- and beta-anomers. Probably facilitates sialidase-negative bacteria to compete successfully for limited amounts of extracellular Neu5Ac, which is likely taken up in the beta-anomer. In addition, the rapid removal of sialic acid from solution might be advantageous to the bacterium to damp down host responses. This chain is N-acetylneuraminate epimerase, found in Escherichia coli O1:K1 / APEC.